A 346-amino-acid polypeptide reads, in one-letter code: Histidinol-phosphate aminotransferase (346 aa).

The residue at position 209 (Lys209) is an N6-(pyridoxal phosphate)lysine.

The protein belongs to the class-II pyridoxal-phosphate-dependent aminotransferase family. Histidinol-phosphate aminotransferase subfamily. Homodimer. The cofactor is pyridoxal 5'-phosphate.

The catalysed reaction is L-histidinol phosphate + 2-oxoglutarate = 3-(imidazol-4-yl)-2-oxopropyl phosphate + L-glutamate. Its pathway is amino-acid biosynthesis; L-histidine biosynthesis; L-histidine from 5-phospho-alpha-D-ribose 1-diphosphate: step 7/9. In Vibrio parahaemolyticus serotype O3:K6 (strain RIMD 2210633), this protein is Histidinol-phosphate aminotransferase.